We begin with the raw amino-acid sequence, 104 residues long: MNKLIILGLACIIAVASAMPYGPGDGHGGGHGGGHGGGHGNGQGGGHGHGPGGGFGGGHGGGHGGGGRGGGGSGGGGSPGHGAGGGYPGGHGGGHHGGYQTHGY.

The N-terminal stretch at 1-20 (MNKLIILGLACIIAVASAMP) is a signal peptide. Residues 22–104 (GPGDGHGGGH…HHGGYQTHGY (83 aa)) are disordered. Gly residues predominate over residues 23–97 (PGDGHGGGHG…PGGHGGGHHG (75 aa)). 18 tandem repeats follow at residues 27-30 (HGGG), 31-34 (HGGG), 35-38 (HGGG), 39-42 (HGNG), 43-46 (QGGG), 47-50 (HGHG), 51-54 (PGGG), 55-58 (FGGG), 59-62 (HGGG), 63-66 (HGGG), 67-70 (GRGG), 71-74 (GGSG), 75-78 (GGGS), 79-82 (PGHG), 83-86 (AGGG), 87-90 (YPGG), 91-94 (HGGG), and 96-98 (HGG). The 18 X 4 AA approximate tandem repeats of H-G-G-G stretch occupies residues 27–98 (HGGGHGGGHG…GGHGGGHHGG (72 aa)).

The protein to T.molitor tenecin 3.

It localises to the secreted. Has antifungal activity against C.albicans. This chain is Holotricin-3, found in Holotrichia diomphalia (Korean black chafer).